We begin with the raw amino-acid sequence, 462 residues long: tRNA wybutosine-synthesizing protein 2 (462 aa).

Residues Ser257, Lys264, and 305–306 (EL) each bind S-adenosyl-L-methionine.

The protein belongs to the class I-like SAM-binding methyltransferase superfamily. TRM5/TYW2 family.

The protein resides in the cytoplasm. It carries out the reaction 4-demethylwyosine(37) in tRNA(Phe) + S-adenosyl-L-methionine = 4-demethyl-7-[(3S)-3-amino-3-carboxypropyl]wyosine(37) in tRNA(Phe) + S-methyl-5'-thioadenosine + H(+). It participates in tRNA modification; wybutosine-tRNA(Phe) biosynthesis. Its function is as follows. S-adenosyl-L-methionine-dependent transferase that acts as a component of the wybutosine biosynthesis pathway. Wybutosine is a hyper modified guanosine with a tricyclic base found at the 3'-position adjacent to the anticodon of eukaryotic phenylalanine tRNA. Catalyzes the transfer of the alpha-amino-alpha-carboxypropyl (acp) group from S-adenosyl-L-methionine to the C-7 position of 4-demethylwyosine (imG-14) to produce wybutosine-86. The chain is tRNA wybutosine-synthesizing protein 2 (TRM12) from Saccharomyces cerevisiae (strain ATCC 204508 / S288c) (Baker's yeast).